We begin with the raw amino-acid sequence, 400 residues long: NADH-quinone oxidoreductase subunit D (400 aa).

This sequence belongs to the complex I 49 kDa subunit family. In terms of assembly, NDH-1 is composed of 14 different subunits. Subunits NuoB, C, D, E, F, and G constitute the peripheral sector of the complex.

The protein resides in the cell inner membrane. It catalyses the reaction a quinone + NADH + 5 H(+)(in) = a quinol + NAD(+) + 4 H(+)(out). Its function is as follows. NDH-1 shuttles electrons from NADH, via FMN and iron-sulfur (Fe-S) centers, to quinones in the respiratory chain. The immediate electron acceptor for the enzyme in this species is believed to be a menaquinone. Couples the redox reaction to proton translocation (for every two electrons transferred, four hydrogen ions are translocated across the cytoplasmic membrane), and thus conserves the redox energy in a proton gradient. In Chlorobaculum parvum (strain DSM 263 / NCIMB 8327) (Chlorobium vibrioforme subsp. thiosulfatophilum), this protein is NADH-quinone oxidoreductase subunit D.